Consider the following 867-residue polypeptide: Inactive tyrosine-protein kinase kin-32 (867 aa).

Positions 3–327 (GLARVFLIGG…GYQMLYNQRD (325 aa)) constitute an FERM domain. The 265-residue stretch at 367-631 (ITLKELIGGG…IIEDVRQQII (265 aa)) folds into the Protein kinase domain. Residues 373 to 381 (IGGGQFGNV) and K400 each bind ATP. The stretch at 662–691 (TLYRTMEDQKRQAEEDAKWLEQEDDEDEDD) forms a coiled coil. The interval 674 to 729 (AEEDAKWLEQEDDEDEDDQDIDQIPSTSHSSVENIRTSNGYLHHTPTSTRSLRFED) is disordered. Acidic residues predominate over residues 683 to 694 (QEDDEDEDDQDI). Over residues 698-724 (PSTSHSSVENIRTSNGYLHHTPTSTRS) the composition is skewed to polar residues.

Belongs to the protein kinase superfamily. Tyr protein kinase family. FAK subfamily. In terms of tissue distribution, expressed in body wall muscles and some neurons in the head.

Has apparently no tyrosine kinase activity in vitro when expressed in mammalian cells. In Caenorhabditis elegans, this protein is Inactive tyrosine-protein kinase kin-32.